The sequence spans 452 residues: GTPase Der (452 aa).

EngA-type G domains are found at residues 4–169 (PVVA…PPAA) and 177–352 (IKVA…ESHR). Residues 10–17 (GRPNVGKS), 57–61 (DTGGL), 120–123 (NKCE), 183–190 (GRPNVGKS), 230–234 (DTAGI), and 295–298 (NKWD) contribute to the GTP site. Positions 353 to 438 (RRVSTSVIND…PIRLIWRGKP (86 aa)) constitute a KH-like domain.

The protein belongs to the TRAFAC class TrmE-Era-EngA-EngB-Septin-like GTPase superfamily. EngA (Der) GTPase family. As to quaternary structure, associates with the 50S ribosomal subunit.

In terms of biological role, GTPase that plays an essential role in the late steps of ribosome biogenesis. This is GTPase Der from Microcystis aeruginosa (strain NIES-843 / IAM M-2473).